The sequence spans 430 residues: Tol-Pal system protein TolB (430 aa).

The first 21 residues, 1 to 21, serve as a signal peptide directing secretion; that stretch reads MKQALRVAFGFLILWASVLHA.

This sequence belongs to the TolB family. In terms of assembly, the Tol-Pal system is composed of five core proteins: the inner membrane proteins TolA, TolQ and TolR, the periplasmic protein TolB and the outer membrane protein Pal. They form a network linking the inner and outer membranes and the peptidoglycan layer.

The protein localises to the periplasm. Part of the Tol-Pal system, which plays a role in outer membrane invagination during cell division and is important for maintaining outer membrane integrity. TolB occupies a key intermediary position in the Tol-Pal system because it communicates directly with both membrane-embedded components, Pal in the outer membrane and TolA in the inner membrane. The polypeptide is Tol-Pal system protein TolB (Shigella dysenteriae serotype 1 (strain Sd197)).